A 154-amino-acid chain; its full sequence is MKLRDSLAENNSIRLQAEANTWQEAVKIGVDLLVAADVVEPRYYQAILDGVEQFGPYFVIAPGLVMPHGRPEEGVKKTGFSLVTLKKPLEFNHEDNDPVDILITMAAVDANTHQEVGIMQIVNLFEDEANFDRLRACRTAQEVLDLIDRTNAAA.

In terms of domain architecture, PTS EIIA type-2 spans 6-150 (SLAENNSIRL…QEVLDLIDRT (145 aa)). The active-site Tele-phosphohistidine intermediate is the His-68. At His-68 the chain carries Phosphohistidine.

It localises to the cytoplasm. In terms of biological role, the phosphoenolpyruvate-dependent sugar phosphotransferase system (sugar PTS), a major carbohydrate active transport system, catalyzes the phosphorylation of incoming sugar substrates concomitantly with their translocation across the cell membrane. The enzyme II UlaABC PTS system is involved in ascorbate transport. The sequence is that of Ascorbate-specific PTS system EIIA component (ulaC) from Salmonella typhi.